The following is a 180-amino-acid chain: Large ribosomal subunit protein uL5 (180 aa).

Belongs to the universal ribosomal protein uL5 family. In terms of assembly, part of the 50S ribosomal subunit; part of the 5S rRNA/L5/L18/L25 subcomplex. Contacts the 5S rRNA and the P site tRNA. Forms a bridge to the 30S subunit in the 70S ribosome.

Functionally, this is one of the proteins that bind and probably mediate the attachment of the 5S RNA into the large ribosomal subunit, where it forms part of the central protuberance. In the 70S ribosome it contacts protein S13 of the 30S subunit (bridge B1b), connecting the 2 subunits; this bridge is implicated in subunit movement. Contacts the P site tRNA; the 5S rRNA and some of its associated proteins might help stabilize positioning of ribosome-bound tRNAs. This is Large ribosomal subunit protein uL5 from Latilactobacillus sakei subsp. sakei (strain 23K) (Lactobacillus sakei subsp. sakei).